Consider the following 130-residue polypeptide: Large ribosomal subunit protein bL20 (130 aa).

This sequence belongs to the bacterial ribosomal protein bL20 family.

Functionally, binds directly to 23S ribosomal RNA and is necessary for the in vitro assembly process of the 50S ribosomal subunit. It is not involved in the protein synthesizing functions of that subunit. The sequence is that of Large ribosomal subunit protein bL20 from Leifsonia xyli subsp. xyli (strain CTCB07).